The sequence spans 259 residues: Tumor necrosis factor receptor superfamily member 10C (259 aa).

Positions 1-25 (MARIPKTLKFVVVIVAVLLPVLAYS) are cleaved as a signal peptide. TNFR-Cys repeat units follow at residues 29–66 (ARQEEVPQQTVAPQQQRHSFKGEECPAGSHRSEHTGAC), 69–109 (CTEG…DTVC), and 110–149 (QCKEGTFRNENSPEMCRKCSRCPSGEVQVSNCTSWDDIQC). Polar residues predominate over residues 30–45 (RQEEVPQQTVAPQQQR). The tract at residues 30–56 (RQEEVPQQTVAPQQQRHSFKGEECPAG) is disordered. 7 disulfide bridges follow: C53–C66, C69–C85, C88–C101, C91–C109, C111–C125, C128–C141, and C131–C149. N77 is a glycosylation site (N-linked (GlcNAc...) (high mannose) asparagine). Residues N140 and N156 are each glycosylated (N-linked (GlcNAc...) (high mannose) asparagine). A disordered region spans residues 160–224 (ETPAAEETMN…TSPGTPAPAA (65 aa)). TAPE repeat units follow at residues 162–176 (PAAEETMNTSPGTPA), 177–191 (PAAEETMNTSPGTPA), 192–206 (PAAEETMTTSPGTPA), 207–221 (PAAEETMTTSPGTPA), and 222–236 (PAAEETMITSPGTPA). Positions 185 to 217 (TSPGTPAPAAEETMTTSPGTPAPAAEETMTTSP) are enriched in low complexity. The GPI-anchor amidated alanine moiety is linked to residue A236. Residues 237 to 259 (SSHYLSCTIVGIIVLIVLLIVFV) constitute a propeptide, removed in mature form.

Post-translationally, N-glycosylated and O-glycosylated. In terms of tissue distribution, higher expression in normal tissues than in tumor cell lines. Highly expressed in peripheral blood lymphocytes, spleen, skeletal muscle, placenta, lung and heart.

It localises to the cell membrane. Its function is as follows. Receptor for the cytotoxic ligand TRAIL. Lacks a cytoplasmic death domain and hence is not capable of inducing apoptosis. May protect cells against TRAIL mediated apoptosis by competing with TRAIL-R1 and R2 for binding to the ligand. The protein is Tumor necrosis factor receptor superfamily member 10C (TNFRSF10C) of Homo sapiens (Human).